The sequence spans 337 residues: Protein hairy (337 aa).

The interaction with Topors stretch occupies residues 29-48 (KSDRRSNKPIMEKRRRARIN). The bHLH domain maps to 31-88 (DRRSNKPIMEKRRRARINNCLNELKTLILDATKKDPARHSKLEKADILEKTVKHLQEL). One can recognise an Orange domain in the interval 107–136 (FKAGFADCVNEVSRFPGIEPAQRRRLLQHL). Disordered regions lie at residues 146-178 (ELHQ…SQQG) and 259-311 (MPQR…VIQR). The segment covering 263-301 (TASTGSASSHSSAGYESAPGSSSSCSYAPPSPANSSYEP) has biased composition (low complexity). The short motif at 334–337 (WRPW) is the WRPW motif element.

As to quaternary structure, transcription repression requires formation of a complex with a corepressor protein (Groucho). Interacts with gro (via WPRW motif) and Topors. In terms of processing, ubiquitinated by Topors.

Its subcellular location is the nucleus. Its function is as follows. Pair-rule protein that regulates embryonic segmentation and adult bristle patterning. Transcriptional repressor of genes that require a bHLH protein for their transcription (e.g. ftz). The chain is Protein hairy from Drosophila melanogaster (Fruit fly).